A 406-amino-acid chain; its full sequence is MARAFLFVLDSFGVGGSPDATSYGDEGADTLGHIAEFCAAGAADREGLRSGPLSLPIMSGLGLLEIAKAATGRYPLGMPLPQKLYGLYGCANEISRGKDTPSGHWEIAGTPVTFDWGYFPTEGDAFPPELVEAICKAADLPGILGNCHASGTDIIARYGEEHIRSGKPICYTSSDSVFQIAAHEQHFGLERLISLCQIVRTLLDPYNIGRVIARPFIGETPANFERTGNRRDFSVLPPEPTLLDRLVAAERKVHAVGKIGDIFAHQGISRIIKANGNMKLMDATLKTMDEAADGDLVFTNFVDFDMVYGHRRDVAGYAAALEAFDARLPEVHRKLKPGDLLILTADHGCDPTWRGTDHTRERVPIIAYELGIRSRPIGIRQTYADIGETVAHHLGIAAGPHGRSFL.

Mn(2+) is bound by residues Asp10, Asp305, His310, Asp346, His347, and His358.

Belongs to the phosphopentomutase family. It depends on Mn(2+) as a cofactor.

It localises to the cytoplasm. The enzyme catalyses 2-deoxy-alpha-D-ribose 1-phosphate = 2-deoxy-D-ribose 5-phosphate. It catalyses the reaction alpha-D-ribose 1-phosphate = D-ribose 5-phosphate. The protein operates within carbohydrate degradation; 2-deoxy-D-ribose 1-phosphate degradation; D-glyceraldehyde 3-phosphate and acetaldehyde from 2-deoxy-alpha-D-ribose 1-phosphate: step 1/2. Isomerase that catalyzes the conversion of deoxy-ribose 1-phosphate (dRib-1-P) and ribose 1-phosphate (Rib-1-P) to deoxy-ribose 5-phosphate (dRib-5-P) and ribose 5-phosphate (Rib-5-P), respectively. The protein is Phosphopentomutase of Rhizobium rhizogenes (strain K84 / ATCC BAA-868) (Agrobacterium radiobacter).